Consider the following 239-residue polypeptide: tRNA1(Val) (adenine(37)-N6)-methyltransferase (239 aa).

The protein belongs to the methyltransferase superfamily. tRNA (adenine-N(6)-)-methyltransferase family.

Its subcellular location is the cytoplasm. The enzyme catalyses adenosine(37) in tRNA1(Val) + S-adenosyl-L-methionine = N(6)-methyladenosine(37) in tRNA1(Val) + S-adenosyl-L-homocysteine + H(+). Functionally, specifically methylates the adenine in position 37 of tRNA(1)(Val) (anticodon cmo5UAC). The sequence is that of tRNA1(Val) (adenine(37)-N6)-methyltransferase from Vibrio campbellii (strain ATCC BAA-1116).